We begin with the raw amino-acid sequence, 221 residues long: GTP-binding nuclear protein Ran-A1 (221 aa).

Residues 10 to 174 form the Small GTPase Ran-type domain; that stretch reads DYPSFKLVIV…LYLARKLAGD (165 aa). Position 21-28 (21-28) interacts with GTP; it reads DGGTGKTT. A switch-I region spans residues 40–48; sequence KKYEPTIGV. GTP contacts are provided by residues Gly-71, 125–128, and 153–155; these read NKVD and SAK. Positions 71–87 are switch-II; sequence GQEKFGGLRDGYYIHGQ. Residues 199–208 show a composition bias toward low complexity; the sequence is QHEAELAAAA. The segment at 199 to 221 is disordered; it reads QHEAELAAAASQPLPDDDDETFD.

Belongs to the small GTPase superfamily. Ran family. As to quaternary structure, found in a nuclear export complex with RanGTP, exportin and pre-miRNA.

The protein resides in the nucleus. Functionally, GTP-binding protein involved in nucleocytoplasmic transport. Required for the import of protein into the nucleus and also for RNA export. Involved in chromatin condensation and control of cell cycle. This is GTP-binding nuclear protein Ran-A1 (RAN-A1) from Nicotiana tabacum (Common tobacco).